The primary structure comprises 169 residues: Der GTPase-activating protein YihI (169 aa).

Disordered stretches follow at residues 1–99 (MKPS…QAEL) and 146–169 (SYDD…LRGN). A compositionally biased stretch (basic residues) spans 10 to 19 (SKGHAKARRK). Residues 20–30 (TREELDQEARD) show a composition bias toward basic and acidic residues. Over residues 31 to 40 (RKRQKKRRGH) the composition is skewed to basic residues. The span at 49-58 (GNTTSGSKGQ) shows a compositional bias: polar residues. Residues 147-159 (YDDDEEEEEDEKQ) show a composition bias toward acidic residues. Positions 160–169 (EDMMRLLRGN) are enriched in basic and acidic residues.

Belongs to the YihI family. As to quaternary structure, interacts with Der.

Its function is as follows. A GTPase-activating protein (GAP) that modifies Der/EngA GTPase function. May play a role in ribosome biogenesis. This Escherichia coli O45:K1 (strain S88 / ExPEC) protein is Der GTPase-activating protein YihI.